Here is a 124-residue protein sequence, read N- to C-terminus: Small ribosomal subunit protein uS12 (124 aa).

A 3-methylthioaspartic acid modification is found at D89.

The protein belongs to the universal ribosomal protein uS12 family. Part of the 30S ribosomal subunit. Contacts proteins S8 and S17. May interact with IF1 in the 30S initiation complex.

With S4 and S5 plays an important role in translational accuracy. Its function is as follows. Interacts with and stabilizes bases of the 16S rRNA that are involved in tRNA selection in the A site and with the mRNA backbone. Located at the interface of the 30S and 50S subunits, it traverses the body of the 30S subunit contacting proteins on the other side and probably holding the rRNA structure together. The combined cluster of proteins S8, S12 and S17 appears to hold together the shoulder and platform of the 30S subunit. The protein is Small ribosomal subunit protein uS12 of Acinetobacter baylyi (strain ATCC 33305 / BD413 / ADP1).